The sequence spans 161 residues: uncharacterized protein (161 aa).

The segment at 72-134 adopts an RING-type zinc-finger fold; the sequence is CAICLDNLQN…EAQQTCPTCR (63 aa). The tract at residues 140–161 is disordered; sequence DKEVEEEERQRNLEELHDSMYG.

This is an uncharacterized protein from Caenorhabditis elegans.